Consider the following 310-residue polypeptide: Zinc finger protein 42 homolog (310 aa).

Positions 1-15 (MSQQLKKRAKTRHQK) are enriched in basic residues. Residues 1 to 35 (MSQQLKKRAKTRHQKGLGGRAPSGAKPRQGKSSQD) are disordered. C2H2-type zinc fingers lie at residues 188-212 (IACP…LLIH), 217-239 (HVCA…FLVH), 245-269 (FRCT…VRIH), and 275-299 (FVCP…ILTH). Residues Lys-231 and Lys-233 each participate in a glycyl lysine isopeptide (Lys-Gly) (interchain with G-Cter in ubiquitin) cross-link.

The protein belongs to the krueppel C2H2-type zinc-finger protein family. Post-translationally, polyubiquitinated by RNF12, leading to proteasomal degradation. Expressed in kidney, epidermal keratinocytes, prostate epithelial cells, bronchial and small airway lung epithelial cells (at protein level). Expressed in malignant kidney and several carcinoma cell lines (at protein level). Expressed in embryonic stem cells, kidney, epidermal keratinocytes, prostate epithelial cells, bronchial and small airway lung epithelial cells. Expressed in embryonal carcinomas, seminomas, malignant kidney and several carcinoma cell lines.

The protein localises to the nucleus. Functionally, involved in the reprogramming of X-chromosome inactivation during the acquisition of pluripotency. Required for efficient elongation of TSIX, a non-coding RNA antisense to XIST. Binds DXPas34 enhancer within the TSIX promoter. Involved in ES cell self-renewal. This Homo sapiens (Human) protein is Zinc finger protein 42 homolog (ZFP42).